Here is a 653-residue protein sequence, read N- to C-terminus: Macrolide export ATP-binding/permease protein MacB (653 aa).

In terms of domain architecture, ABC transporter spans 6–244 (LQLTRVTRRF…DAASGASGDA (239 aa)). An ATP-binding site is contributed by 42–49 (GASGSGKS). 4 consecutive transmembrane segments (helical) span residues 278 to 298 (LLTM…VAIG), 526 to 546 (LTLL…IGVM), 587 to 607 (MGGA…SLFV), and 616 to 636 (AGSI…FGFM).

The protein belongs to the ABC transporter superfamily. Macrolide exporter (TC 3.A.1.122) family. In terms of assembly, homodimer.

The protein resides in the cell inner membrane. Non-canonical ABC transporter that contains transmembrane domains (TMD), which form a pore in the inner membrane, and an ATP-binding domain (NBD), which is responsible for energy generation. Confers resistance against macrolides. The protein is Macrolide export ATP-binding/permease protein MacB of Burkholderia thailandensis (strain ATCC 700388 / DSM 13276 / CCUG 48851 / CIP 106301 / E264).